Consider the following 150-residue polypeptide: Placenta-specific protein 4 (150 aa).

As to expression, expressed in placental syncytiotrophoblast and choriocarcinoma cells.

This Homo sapiens (Human) protein is Placenta-specific protein 4 (PLAC4).